The following is a 496-amino-acid chain: Probable cytosol aminopeptidase (496 aa).

Residues Lys-251 and Asp-256 each coordinate Mn(2+). The active site involves Lys-263. Residues Asp-274, Asp-333, and Glu-335 each contribute to the Mn(2+) site. Arg-337 is a catalytic residue.

The protein belongs to the peptidase M17 family. The cofactor is Mn(2+).

The protein resides in the cytoplasm. It carries out the reaction Release of an N-terminal amino acid, Xaa-|-Yaa-, in which Xaa is preferably Leu, but may be other amino acids including Pro although not Arg or Lys, and Yaa may be Pro. Amino acid amides and methyl esters are also readily hydrolyzed, but rates on arylamides are exceedingly low.. The enzyme catalyses Release of an N-terminal amino acid, preferentially leucine, but not glutamic or aspartic acids.. Functionally, presumably involved in the processing and regular turnover of intracellular proteins. Catalyzes the removal of unsubstituted N-terminal amino acids from various peptides. This chain is Probable cytosol aminopeptidase, found in Acidovorax sp. (strain JS42).